The following is a 318-amino-acid chain: Fibronectin type III domain-containing protein 11 (318 aa).

The region spanning 210–307 is the Fibronectin type-III domain; that stretch reads VVFDRKASAA…DSLTLHTKPE (98 aa).

The chain is Fibronectin type III domain-containing protein 11 (FNDC11) from Homo sapiens (Human).